Here is a 138-residue protein sequence, read N- to C-terminus: Putative pre-16S rRNA nuclease (138 aa).

It belongs to the YqgF nuclease family.

It is found in the cytoplasm. Could be a nuclease involved in processing of the 5'-end of pre-16S rRNA. The chain is Putative pre-16S rRNA nuclease from Salmonella arizonae (strain ATCC BAA-731 / CDC346-86 / RSK2980).